Reading from the N-terminus, the 342-residue chain is tRNA-specific 2-thiouridylase MnmA 2 (342 aa).

Cys62 functions as the Nucleophile in the catalytic mechanism. A disulfide bond links Cys62 and Cys160. Gly86 contacts ATP. An interaction with tRNA region spans residues 110–112 (KDQ). Residue Cys160 is the Cysteine persulfide intermediate of the active site. The tract at residues 268 to 269 (RY) is interaction with tRNA.

The protein belongs to the MnmA/TRMU family.

Its subcellular location is the cytoplasm. It carries out the reaction S-sulfanyl-L-cysteinyl-[protein] + uridine(34) in tRNA + AH2 + ATP = 2-thiouridine(34) in tRNA + L-cysteinyl-[protein] + A + AMP + diphosphate + H(+). Functionally, catalyzes the 2-thiolation of uridine at the wobble position (U34) of tRNA, leading to the formation of s(2)U34. The chain is tRNA-specific 2-thiouridylase MnmA 2 from Syntrophus aciditrophicus (strain SB).